Reading from the N-terminus, the 859-residue chain is Leucine--tRNA ligase (859 aa).

The short motif at 43–53 (PYPSGRIHMGH) is the 'HIGH' region element. A 'KMSKS' region motif is present at residues 614-618 (KMSKS). Lys617 is a binding site for ATP.

The protein belongs to the class-I aminoacyl-tRNA synthetase family.

Its subcellular location is the cytoplasm. It catalyses the reaction tRNA(Leu) + L-leucine + ATP = L-leucyl-tRNA(Leu) + AMP + diphosphate. The protein is Leucine--tRNA ligase of Magnetococcus marinus (strain ATCC BAA-1437 / JCM 17883 / MC-1).